We begin with the raw amino-acid sequence, 494 residues long: Cysteine--tRNA ligase (494 aa).

Position 29 (cysteine 29) interacts with Zn(2+). Residues 31–41 (VTVYDHCHIGH) carry the 'HIGH' region motif. Cysteine 209, histidine 234, and glutamate 238 together coordinate Zn(2+). The 'KMSKS' region signature appears at 266–270 (KMSKS). Lysine 269 provides a ligand contact to ATP.

It belongs to the class-I aminoacyl-tRNA synthetase family. In terms of assembly, monomer. Zn(2+) is required as a cofactor.

The protein localises to the cytoplasm. It carries out the reaction tRNA(Cys) + L-cysteine + ATP = L-cysteinyl-tRNA(Cys) + AMP + diphosphate. The protein is Cysteine--tRNA ligase of Geotalea daltonii (strain DSM 22248 / JCM 15807 / FRC-32) (Geobacter daltonii).